Here is a 214-residue protein sequence, read N- to C-terminus: Probable transaldolase (214 aa).

The Schiff-base intermediate with substrate role is filled by Lys-83.

It belongs to the transaldolase family. Type 3B subfamily.

It localises to the cytoplasm. The enzyme catalyses D-sedoheptulose 7-phosphate + D-glyceraldehyde 3-phosphate = D-erythrose 4-phosphate + beta-D-fructose 6-phosphate. The protein operates within carbohydrate degradation; pentose phosphate pathway; D-glyceraldehyde 3-phosphate and beta-D-fructose 6-phosphate from D-ribose 5-phosphate and D-xylulose 5-phosphate (non-oxidative stage): step 2/3. Its function is as follows. Transaldolase is important for the balance of metabolites in the pentose-phosphate pathway. This Streptococcus pyogenes serotype M2 (strain MGAS10270) protein is Probable transaldolase.